We begin with the raw amino-acid sequence, 155 residues long: NADPH-dependent 7-cyano-7-deazaguanine reductase (155 aa).

Cys52 functions as the Thioimide intermediate in the catalytic mechanism. Asp59 functions as the Proton donor in the catalytic mechanism. Substrate contacts are provided by residues 74 to 76 and 93 to 94; these read VES and HE.

Belongs to the GTP cyclohydrolase I family. QueF type 1 subfamily.

Its subcellular location is the cytoplasm. It catalyses the reaction 7-aminomethyl-7-carbaguanine + 2 NADP(+) = 7-cyano-7-deazaguanine + 2 NADPH + 3 H(+). The protein operates within tRNA modification; tRNA-queuosine biosynthesis. In terms of biological role, catalyzes the NADPH-dependent reduction of 7-cyano-7-deazaguanine (preQ0) to 7-aminomethyl-7-deazaguanine (preQ1). The protein is NADPH-dependent 7-cyano-7-deazaguanine reductase of Syntrophobacter fumaroxidans (strain DSM 10017 / MPOB).